A 120-amino-acid chain; its full sequence is Large ribosomal subunit protein uL18 (120 aa).

Belongs to the universal ribosomal protein uL18 family. In terms of assembly, part of the 50S ribosomal subunit; part of the 5S rRNA/L5/L18/L25 subcomplex. Contacts the 5S and 23S rRNAs.

This is one of the proteins that bind and probably mediate the attachment of the 5S RNA into the large ribosomal subunit, where it forms part of the central protuberance. The sequence is that of Large ribosomal subunit protein uL18 from Bartonella bacilliformis (strain ATCC 35685 / KC583 / Herrer 020/F12,63).